The sequence spans 272 residues: MFGFPTATLLDCHGRYAQNVAFFNVMTEAHKYDPSEATGSSSWDFQSSFRREKLEQKSPESKALQEDSPGVRQKVYDCQECGKSFRQKGSLTLHERIHTGQKPFECTQCGKSFRAKGNLVTHQRIHTGEKPYQCKECGKSFSQRGSLAVHERLHTGQKPYECAICQRSFRNQSNLAVHRRVHSGEKPYRCDQCGKAFSQKGSLIVHIRVHTGLKPYACSHCRKSFHTRGNCLLHGKVHTGETPYLCGQCGKSFTQRGSLAVHQRSCSQRLTL.

Over residues 50 to 65 (RREKLEQKSPESKALQ) the composition is skewed to basic and acidic residues. The disordered stretch occupies residues 50-69 (RREKLEQKSPESKALQEDSP). 3 consecutive C2H2-type zinc fingers follow at residues 76–98 (YDCQ…ERIH), 104–126 (FECT…QRIH), and 132–154 (YQCK…ERLH). Zn(2+) contacts are provided by Cys-78, Cys-81, His-94, His-98, Cys-106, Cys-109, His-122, His-126, Ser-140, Gln-143, Gly-156, Tyr-160, Phe-197, Lys-200, Leu-213, Ala-217, Cys-246, Cys-249, His-262, and Cys-266. C2H2-type zinc fingers lie at residues 160-182 (YECA…RRVH) and 188-210 (YRCD…IRVH). The segment at 216–238 (YACSHCRKSFHTRGNCLLHGKVH) adopts a C2H2-type 6 zinc-finger fold. A CCHC-type zinc finger spans residues 244 to 266 (YLCGQCGKSFTQRGSLAVHQRSC).

The protein belongs to the krueppel C2H2-type zinc-finger protein family.

It is found in the nucleus. Functionally, may be involved in transcriptional regulation. This chain is Zinc finger protein 32 (Znf32), found in Mus musculus (Mouse).